Consider the following 294-residue polypeptide: Large ribosomal subunit protein uL2 (294 aa).

Disordered stretches follow at residues 1–37 (MGIR…RPEK) and 228–294 (GSVM…RAAQ). Residues 10 to 22 (TPSTRHMTVSNFE) show a composition bias toward polar residues. Positions 23-37 (ELSRDENGKRPRPEK) are enriched in basic and acidic residues. Basic residues predominate over residues 264–285 (KTRKRNKPSNKFIVRGRRRGGR).

This sequence belongs to the universal ribosomal protein uL2 family. Part of the 50S ribosomal subunit. Forms a bridge to the 30S subunit in the 70S ribosome.

Functionally, one of the primary rRNA binding proteins. Required for association of the 30S and 50S subunits to form the 70S ribosome, for tRNA binding and peptide bond formation. It has been suggested to have peptidyltransferase activity; this is somewhat controversial. Makes several contacts with the 16S rRNA in the 70S ribosome. In Synechococcus sp. (strain JA-3-3Ab) (Cyanobacteria bacterium Yellowstone A-Prime), this protein is Large ribosomal subunit protein uL2.